Reading from the N-terminus, the 216-residue chain is Somatotropin (216 aa).

Residues 1 to 25 (MAPGSWFSPLFITVITLGLQWPQEA) form the signal peptide. A Zn(2+)-binding site is contributed by His-46. Cys-78 and Cys-189 are joined by a disulfide. A Zn(2+)-binding site is contributed by Glu-198. Residues Cys-206 and Cys-214 are joined by a disulfide bond.

It belongs to the somatotropin/prolactin family.

It localises to the secreted. Growth hormone plays an important role in growth control. The chain is Somatotropin (GH) from Anas platyrhynchos (Mallard).